Here is a 553-residue protein sequence, read N- to C-terminus: Zinc finger protein 426 (553 aa).

One can recognise a KRAB domain in the interval 40–111 (VSFDDVIVDF…KIVFPEWKIQ (72 aa)). 11 consecutive C2H2-type zinc fingers follow at residues 222–244 (FECSDCGKSFMNQSHLQTHQRTH), 277–299 (HRCKECGKGYRYPAYLNIHMRTH), 305–327 (YECKECGKAFNYSNSFQIHGRTH), 333–355 (YVCNQCGKAFTQHSGLSIHVRSH), 361–383 (YACKECGKAFLTSSRLIQHIRTH), 389–411 (FVCVKCGKAFAISSNLNGHLKMH), 417–439 (CECKICGKAFGYLSCLNNHMRTH), 445–467 (YTCKECGKAFNYSTHLKIHMRIH), 473–495 (YECKQCGKAFSHSTSFQIHERTH), 501–525 (YECKECGKAFICPSSFRIHEISHTH), and 531–553 (YKCQQCGKAYSHPRSLRRHERIH).

The protein resides in the nucleus. In terms of biological role, may be involved in transcriptional regulation. The sequence is that of Zinc finger protein 426 (Znf426) from Rattus norvegicus (Rat).